A 504-amino-acid chain; its full sequence is Sodium-coupled neutral amino acid symporter 2 (504 aa).

The tract at residues 1–28 (MNKAPAQMSRFNIAPDMDSSSTNSNEYT) is disordered. Residues 1 to 79 (MNKAPAQMSR…SPGSASFGMS (79 aa)) lie on the Cytoplasmic side of the membrane. Residues 1–99 (MNKAPAQMSR…SGILGLSYAM (99 aa)) are regulates protein turnover upon amino acid deprivation. Over residues 19–28 (SSSTNSNEYT) the composition is skewed to low complexity. Residues 80 to 99 (VFNLGNAIMGSGILGLSYAM) traverse the membrane as a helical segment. Asn85 lines the Na(+) pocket. At 100 to 105 (ANTGIA) the chain is on the extracellular side. A helical transmembrane segment spans residues 106-126 (MFVILLVAVAIFSLYSVHLLL). The Cytoplasmic portion of the chain corresponds to 127 to 161 (KTANEGGSLVYEQLGYKAFGIPGKLAASCSITMQN). A helical transmembrane segment spans residues 162–180 (FGAMASYLYIVKYELPIVI). At 181–189 (RAFLDSNDN) the chain is on the extracellular side. A helical transmembrane segment spans residues 190 to 210 (AWYTNGDYLVLIVTMSIILPL). At 211 to 218 (SLLKNLGY) the chain is on the cytoplasmic side. The helical transmembrane segment at 219-239 (LGYTSGFSLLCMVFFLIVVIY) threads the bilayer. Residues 240 to 285 (KKFQIPCPLPENFINITVNVSQPPQTNNSTDEECCKPKYFIFNSQT) are Extracellular-facing. Cys246 and Cys274 are disulfide-bonded. N-linked (GlcNAc...) asparagine glycosylation is found at Asn254 and Asn258. Residues 286-306 (VYAVPILTFAFVCHPAILPMY) traverse the membrane as a helical segment. Residues 307 to 322 (EELKDRSRRKMQNVAN) lie on the Cytoplasmic side of the membrane. The helical transmembrane segment at 323–343 (VSFLGMFIMYLLAALFGYLTF) threads the bilayer. Residues 344–364 (NEAVEPELLHTYSKVYNFDVV) lie on the Extracellular side of the membrane. Residues 365–385 (LLIVRLAVLTAVTLTVPVVLF) traverse the membrane as a helical segment. Residue Thr379 participates in Na(+) binding. Over 386-406 (PIRTSVNHLLGASKEFSWPRH) the chain is Cytoplasmic. The helical transmembrane segment at 407-427 (ICITVALLVCVNILVIFVPTI) threads the bilayer. Residues 428–429 (RD) lie on the Extracellular side of the membrane. Residues 430-450 (IFGFIGASAAAMLIFILPSAF) form a helical membrane-spanning segment. The Cytoplasmic portion of the chain corresponds to 451 to 465 (YIKLVKKESMKSVQK). The chain crosses the membrane as a helical span at residues 466–488 (IGATLFLIMGFLVMTGSMALIIM). Residues 489–504 (DWIHNALSSEEHTGGH) lie on the Extracellular side of the membrane.

Belongs to the amino acid/polyamine transporter 2 family.

It localises to the cell membrane. The catalysed reaction is L-alanine(in) + Na(+)(in) = L-alanine(out) + Na(+)(out). It carries out the reaction glycine(in) + Na(+)(in) = glycine(out) + Na(+)(out). The enzyme catalyses L-serine(in) + Na(+)(in) = L-serine(out) + Na(+)(out). It catalyses the reaction L-proline(in) + Na(+)(in) = L-proline(out) + Na(+)(out). The catalysed reaction is L-methionine(in) + Na(+)(in) = L-methionine(out) + Na(+)(out). It carries out the reaction L-histidine(in) + Na(+)(in) = L-histidine(out) + Na(+)(out). The enzyme catalyses L-asparagine(in) + Na(+)(in) = L-asparagine(out) + Na(+)(out). It catalyses the reaction L-glutamine(in) + Na(+)(in) = L-glutamine(out) + Na(+)(out). The catalysed reaction is L-threonine(in) + Na(+)(in) = L-threonine(out) + Na(+)(out). It carries out the reaction L-leucine(in) + Na(+)(in) = L-leucine(out) + Na(+)(out). The enzyme catalyses L-phenylalanine(in) + Na(+)(in) = L-phenylalanine(out) + Na(+)(out). Inhibited by N-methyl-D-glucamine. Inhibited by choline. Allosteric regulation of sodium ions binding by pH. Symporter that cotransports neutral amino acids and sodium ions from the extracellular to the intracellular side of the cell membrane. The transport is pH-sensitive, Li(+)-intolerant, electrogenic, driven by the Na(+) electrochemical gradient and cotransports of neutral amino acids and sodium ions with a stoichiometry of 1:1. This chain is Sodium-coupled neutral amino acid symporter 2, found in Danio rerio (Zebrafish).